The chain runs to 300 residues: tRNA dimethylallyltransferase 1 (300 aa).

10–17 (GPTGVGKT) serves as a coordination point for ATP. Residue 12 to 17 (TGVGKT) participates in substrate binding. Residues 35 to 38 (DSRQ) form an interaction with substrate tRNA region.

The protein belongs to the IPP transferase family. As to quaternary structure, monomer. Mg(2+) serves as cofactor.

It carries out the reaction adenosine(37) in tRNA + dimethylallyl diphosphate = N(6)-dimethylallyladenosine(37) in tRNA + diphosphate. Its function is as follows. Catalyzes the transfer of a dimethylallyl group onto the adenine at position 37 in tRNAs that read codons beginning with uridine, leading to the formation of N6-(dimethylallyl)adenosine (i(6)A). This Phocaeicola vulgatus (strain ATCC 8482 / DSM 1447 / JCM 5826 / CCUG 4940 / NBRC 14291 / NCTC 11154) (Bacteroides vulgatus) protein is tRNA dimethylallyltransferase 1.